Consider the following 301-residue polypeptide: t-SNARE affecting a late Golgi compartment protein 2 (301 aa).

The Cytoplasmic segment spans residues 1-279; that stretch reads MAYRDRTGLY…SHQKNTGRLR (279 aa). Residues 92-120 are a coiled coil; it reads SDKTEQENEIQRLTIQITQDFQRCQKLLQ. A t-SNARE coiled-coil homology domain is found at 206 to 268; sequence DEQAIRHERA…KSAEKELIKA (63 aa). Residues 280 to 300 form a helical; Anchor for type IV membrane protein membrane-spanning segment; that stretch reads FICFLILLIVALIVILAIKLL. Arg-301 is a topological domain (vesicular).

The protein belongs to the syntaxin family.

Its subcellular location is the golgi apparatus. The protein localises to the trans-Golgi network membrane. It is found in the endosome membrane. T-SNARE that functions in transport from the endosome to the late Golgi and on the endocytic pathway. In Schizosaccharomyces pombe (strain 972 / ATCC 24843) (Fission yeast), this protein is t-SNARE affecting a late Golgi compartment protein 2 (tlg2).